A 281-amino-acid polypeptide reads, in one-letter code: MGSQGSPVKSYDYLLKFLLVGDSDVGKGEILESLQDGAAESPYAYSNGIDYKTTTILLDGRRVKLELWDTSGQGRFCTIFRSYSRGAQGILLVYDITNRWSFDGIDRWIKEIDEHAPGVPRILVGNRLHLAFKRQVPTEQARAYAEKNCMTFFEVSPLCNFNVIESFTELSRIVLMRHGMEKIWRPNRVFSLQDLCCRAIVSCTPVHLIDKLPLPVTIKSHLKSFSMANGMNAVMMHGRSYSLASGAGGGGSKGNSLKRSKSIRPPQSPPQNCSRSNCKIS.

GTP is bound by residues serine 23, glycine 26, lysine 27, and serine 46. The interval 41 to 49 (SPYAYSNGI) is switch-I. Mg(2+) contacts are provided by serine 46 and aspartate 69. Positions 72, 126, and 127 each coordinate GTP. The segment at 72-88 (GQGRFCTIFRSYSRGAQ) is switch-II. The 54-residue stretch at 175–228 (LMRHGMEKIWRPNRVFSLQDLCCRAIVSCTPVHLIDKLPLPVTIKSHLKSFSMA) folds into the SOCS box domain. The disordered stretch occupies residues 245 to 281 (SGAGGGGSKGNSLKRSKSIRPPQSPPQNCSRSNCKIS). Over residues 270–281 (PQNCSRSNCKIS) the composition is skewed to polar residues. Cysteine 273 is lipidated: S-palmitoyl cysteine. Cysteine 278 is lipidated: S-geranylgeranyl cysteine.

It belongs to the small GTPase superfamily. Rab family. Component of the cullin-5-RING E3 ubiquitin-protein ligase complex (ECS(RAB40C) complex) composed of CUL5, Elongin BC (ELOB and ELOC), RNF7/RBX2 and RAB40C. Interacts with protein phosphatase 6 (PP6) complex components ANKRD28, ANKRD52, PPP6C, PP6R1 and PP6R2; the interaction leads to ANKRD28 ubiquitination and decreased PP6 activity. Interacts with DAB2IP; DAB2IP acts as a GAP for RAB40C. Mg(2+) is required as a cofactor.

The protein localises to the cell membrane. The protein resides in the cytoplasm. It is found in the cytosol. Its subcellular location is the golgi apparatus membrane. The enzyme catalyses GTP + H2O = GDP + phosphate + H(+). It participates in protein modification; protein ubiquitination. With respect to regulation, regulated by guanine nucleotide exchange factors (GEFs) which promote the exchange of bound GDP for free GTP. Regulated by GTPase activating proteins (GAPs) including DAB2IP, which increase the GTP hydrolysis activity. Inhibited by GDP dissociation inhibitors (GDIs). Functionally, RAB40C small GTPase acts as substrate-recognition component of the ECS(RAB40C) E3 ubiquitin ligase complex which mediates the ubiquitination and subsequent proteasomal degradation of target proteins. The Rab40 subfamily belongs to the Rab family that are key regulators of intracellular membrane trafficking, from the formation of transport vesicles to their fusion with membranes. Rabs cycle between an inactive GDP-bound form and an active GTP-bound form that is able to recruit to membranes different sets of downstream effectors directly responsible for vesicle formation, movement, tethering and fusion. As part of the ECS(RAB40C) complex, mediates ANKRD28 ubiquitination and degradation, thereby inhibiting protein phosphatase 6 (PP6) complex activity and focal adhesion assembly during cell migration. Also negatively regulate lipid droplets accumulation in a GTP-dependent manner. This Homo sapiens (Human) protein is Ras-related protein Rab-40C.